A 106-amino-acid chain; its full sequence is Pyrimidine/purine nucleoside phosphorylase (106 aa).

This sequence belongs to the nucleoside phosphorylase PpnP family.

It carries out the reaction a purine D-ribonucleoside + phosphate = a purine nucleobase + alpha-D-ribose 1-phosphate. The enzyme catalyses adenosine + phosphate = alpha-D-ribose 1-phosphate + adenine. The catalysed reaction is cytidine + phosphate = cytosine + alpha-D-ribose 1-phosphate. It catalyses the reaction guanosine + phosphate = alpha-D-ribose 1-phosphate + guanine. It carries out the reaction inosine + phosphate = alpha-D-ribose 1-phosphate + hypoxanthine. The enzyme catalyses thymidine + phosphate = 2-deoxy-alpha-D-ribose 1-phosphate + thymine. The catalysed reaction is uridine + phosphate = alpha-D-ribose 1-phosphate + uracil. It catalyses the reaction xanthosine + phosphate = alpha-D-ribose 1-phosphate + xanthine. Its function is as follows. Catalyzes the phosphorolysis of diverse nucleosides, yielding D-ribose 1-phosphate and the respective free bases. Can use uridine, adenosine, guanosine, cytidine, thymidine, inosine and xanthosine as substrates. Also catalyzes the reverse reactions. This chain is Pyrimidine/purine nucleoside phosphorylase, found in Burkholderia multivorans (strain ATCC 17616 / 249).